The sequence spans 796 residues: Probable phosphoketolase (796 aa).

Belongs to the XFP family. The cofactor is thiamine diphosphate.

The polypeptide is Probable phosphoketolase (Synechococcus elongatus (strain ATCC 33912 / PCC 7942 / FACHB-805) (Anacystis nidulans R2)).